We begin with the raw amino-acid sequence, 916 residues long: Translation initiation factor IF-2 (916 aa).

The disordered stretch occupies residues 50-326; it reads NRDKESTSQP…NSTLQQGFNK (277 aa). The segment covering 109–241 has biased composition (basic and acidic residues); that stretch reads AQREAEEKAR…LAEENAEKWT (133 aa). Basic residues predominate over residues 277-291; that stretch reads GRGRAAKAPRPKKNN. The span at 292 to 304 shows a compositional bias: basic and acidic residues; sequence RHSEKADREEARA. The region spanning 415–584 is the tr-type G domain; that stretch reads SRAPVVTIMG…LLQAEVLELK (170 aa). A G1 region spans residues 424-431; that stretch reads GHVDHGKT. 424-431 lines the GTP pocket; it reads GHVDHGKT. The G2 stretch occupies residues 449–453; the sequence is GITQH. A G3 region spans residues 470–473; that stretch reads DTPG. GTP contacts are provided by residues 470 to 474 and 524 to 527; these read DTPGH and NKID. Residues 524-527 form a G4 region; that stretch reads NKID. The segment at 560–562 is G5; it reads SAK.

This sequence belongs to the TRAFAC class translation factor GTPase superfamily. Classic translation factor GTPase family. IF-2 subfamily.

The protein resides in the cytoplasm. One of the essential components for the initiation of protein synthesis. Protects formylmethionyl-tRNA from spontaneous hydrolysis and promotes its binding to the 30S ribosomal subunits. Also involved in the hydrolysis of GTP during the formation of the 70S ribosomal complex. The protein is Translation initiation factor IF-2 of Proteus mirabilis (strain HI4320).